The following is a 263-amino-acid chain: MPEGPEIRRAADNLEAAIKGKPLTDVWFAFPQLKSYQSQLIGQHVTHVETRGKALLTHFSNELTLYSHNQLYGVWRVVDTGEEPQTTRVLRVKLQTADKTILLYSASDIEMLTPEQLTTHPFLQRVGPDVLDPNLTPEVVKERLLSPRFRNRQFAGLLLDQAFLAGLGNYLRVEILWQVGLTGNHKAKDLNAAQLDALAHALLDIPRLSYATRGQVDENKHHGALFRFKVFHRDGELCERCGGIIEKTTLSSRPFYWCPGCQH.

Residue proline 2 is the Schiff-base intermediate with DNA of the active site. The Proton donor role is filled by glutamate 3. Lysine 53 acts as the Proton donor; for beta-elimination activity in catalysis. Residues glutamine 70, arginine 125, and asparagine 169 each contribute to the DNA site. The segment at 229–263 adopts an FPG-type zinc-finger fold; it reads KVFHRDGELCERCGGIIEKTTLSSRPFYWCPGCQH. Arginine 253 serves as the catalytic Proton donor; for delta-elimination activity.

Belongs to the FPG family. It depends on Zn(2+) as a cofactor.

It carries out the reaction 2'-deoxyribonucleotide-(2'-deoxyribose 5'-phosphate)-2'-deoxyribonucleotide-DNA = a 3'-end 2'-deoxyribonucleotide-(2,3-dehydro-2,3-deoxyribose 5'-phosphate)-DNA + a 5'-end 5'-phospho-2'-deoxyribonucleoside-DNA + H(+). Involved in base excision repair of DNA damaged by oxidation or by mutagenic agents. Acts as a DNA glycosylase that recognizes and removes damaged bases. Has a preference for oxidized pyrimidines, such as thymine glycol, 5,6-dihydrouracil and 5,6-dihydrothymine. Has AP (apurinic/apyrimidinic) lyase activity and introduces nicks in the DNA strand. Cleaves the DNA backbone by beta-delta elimination to generate a single-strand break at the site of the removed base with both 3'- and 5'-phosphates. This Escherichia coli O7:K1 (strain IAI39 / ExPEC) protein is Endonuclease 8.